We begin with the raw amino-acid sequence, 222 residues long: Probable fimbrial chaperone EcpB (222 aa).

The N-terminal stretch at 1–20 is a signal peptide; sequence MKKHLLPLALLFSGISPAQA.

The protein belongs to the EcpB/EcpE family.

Its function is as follows. Part of the ecpRABCDE operon, which encodes the E.coli common pilus (ECP). ECP is found in both commensal and pathogenic strains and plays a dual role in early-stage biofilm development and host cell recognition. The polypeptide is Probable fimbrial chaperone EcpB (ecpB) (Escherichia coli (strain K12)).